The chain runs to 383 residues: Na(+)/H(+) antiporter NhaA (383 aa).

Transmembrane regions (helical) follow at residues 10–30 (LIGG…NNSP), 56–76 (LMHW…GLEI), 91–111 (IITP…IYLS), 121–141 (GWAI…ALLG), 150–170 (LLVI…IAIF), 174–194 (SLSL…IICN), 206–226 (VVLG…ATLA), 254–274 (PWII…ISFS), 289–308 (IIWG…LAVF), 327–347 (GISL…VLAF), and 355–375 (AIKI…YIVL).

Belongs to the NhaA Na(+)/H(+) (TC 2.A.33) antiporter family.

The protein localises to the cell inner membrane. It catalyses the reaction Na(+)(in) + 2 H(+)(out) = Na(+)(out) + 2 H(+)(in). Functionally, na(+)/H(+) antiporter that extrudes sodium in exchange for external protons. In Francisella tularensis subsp. tularensis (strain SCHU S4 / Schu 4), this protein is Na(+)/H(+) antiporter NhaA.